Reading from the N-terminus, the 432-residue chain is Enolase (432 aa).

A (2R)-2-phosphoglycerate-binding site is contributed by glutamine 163. Catalysis depends on glutamate 205, which acts as the Proton donor. Residues aspartate 242, glutamate 285, and aspartate 312 each coordinate Mg(2+). (2R)-2-phosphoglycerate-binding residues include lysine 337, arginine 366, serine 367, and lysine 388. Residue lysine 337 is the Proton acceptor of the active site.

This sequence belongs to the enolase family. The cofactor is Mg(2+).

It is found in the cytoplasm. Its subcellular location is the secreted. The protein resides in the cell surface. The enzyme catalyses (2R)-2-phosphoglycerate = phosphoenolpyruvate + H2O. It functions in the pathway carbohydrate degradation; glycolysis; pyruvate from D-glyceraldehyde 3-phosphate: step 4/5. Catalyzes the reversible conversion of 2-phosphoglycerate (2-PG) into phosphoenolpyruvate (PEP). It is essential for the degradation of carbohydrates via glycolysis. This chain is Enolase, found in Bifidobacterium longum subsp. infantis (strain ATCC 15697 / DSM 20088 / JCM 1222 / NCTC 11817 / S12).